Reading from the N-terminus, the 94-residue chain is CRISPR-associated endoribonuclease Cas2 (94 aa).

Mg(2+) is bound at residue Asp10.

Belongs to the CRISPR-associated endoribonuclease Cas2 protein family. In terms of assembly, homodimer, forms a heterotetramer with a Cas1 homodimer. The cofactor is Mg(2+).

Functionally, CRISPR (clustered regularly interspaced short palindromic repeat), is an adaptive immune system that provides protection against mobile genetic elements (viruses, transposable elements and conjugative plasmids). CRISPR clusters contain sequences complementary to antecedent mobile elements and target invading nucleic acids. CRISPR clusters are transcribed and processed into CRISPR RNA (crRNA). Functions as a ssRNA-specific endoribonuclease. Involved in the integration of spacer DNA into the CRISPR cassette. The protein is CRISPR-associated endoribonuclease Cas2 of Leptospira interrogans serogroup Icterohaemorrhagiae serovar Lai (strain 56601).